We begin with the raw amino-acid sequence, 96 residues long: Large ribosomal subunit protein bL21 (96 aa).

Basic residues predominate over residues 73–84 (KRRKRYQSRNGH). Positions 73 to 96 (KRRKRYQSRNGHRQQMTQIEVVSL) are disordered. The span at 85–96 (RQQMTQIEVVSL) shows a compositional bias: polar residues.

It belongs to the bacterial ribosomal protein bL21 family. As to quaternary structure, part of the 50S ribosomal subunit. Contacts protein L20.

In terms of biological role, this protein binds to 23S rRNA in the presence of protein L20. This Chlorobium luteolum (strain DSM 273 / BCRC 81028 / 2530) (Pelodictyon luteolum) protein is Large ribosomal subunit protein bL21.